Reading from the N-terminus, the 519-residue chain is Importin subunit alpha-9 (519 aa).

Residues 1 to 29 are disordered; that stretch reads MADDGSASNRRDPIKSSVGNVAGQRRRKQ. 8 ARM repeats span residues 116 to 156, 158 to 197, 200 to 239, 244 to 283, 286 to 326, 335 to 374, 377 to 416, and 429 to 468; these read FPPV…NIAA, KPEE…NVAG, EDLR…NLIK, KAAA…YLSA, DIAT…NFVA, ILIR…NIAA, IEHK…NLCV, and QEHL…LVLR.

This sequence belongs to the importin alpha family. In terms of assembly, forms a complex with importin subunit beta-1.

It is found in the nucleus envelope. Binds to conventional NLS motifs and mediates nuclear protein import across the nuclear envelope. Acts as a cellular receptor for the nuclear import of the virD2 protein of Agrobacterium, but is not essential for Agrobacterium-mediated root transformation. The protein is Importin subunit alpha-9 of Arabidopsis thaliana (Mouse-ear cress).